Here is a 475-residue protein sequence, read N- to C-terminus: Adenosylhomocysteinase (475 aa).

Substrate contacts are provided by T60, D133, and E198. NAD(+) is bound at residue 199–201 (TTT). 2 residues coordinate substrate: K228 and D232. Residues N233, 262–267 (GYGDVG), E285, N320, 341–343 (IGH), and N389 each bind NAD(+).

It belongs to the adenosylhomocysteinase family. Requires NAD(+) as cofactor.

The protein localises to the cytoplasm. The catalysed reaction is S-adenosyl-L-homocysteine + H2O = L-homocysteine + adenosine. It functions in the pathway amino-acid biosynthesis; L-homocysteine biosynthesis; L-homocysteine from S-adenosyl-L-homocysteine: step 1/1. Functionally, may play a key role in the regulation of the intracellular concentration of adenosylhomocysteine. The protein is Adenosylhomocysteinase of Syntrophotalea carbinolica (strain DSM 2380 / NBRC 103641 / GraBd1) (Pelobacter carbinolicus).